A 464-amino-acid chain; its full sequence is Argininosuccinate lyase (464 aa).

The protein belongs to the lyase 1 family. Argininosuccinate lyase subfamily.

The protein resides in the cytoplasm. The enzyme catalyses 2-(N(omega)-L-arginino)succinate = fumarate + L-arginine. The protein operates within amino-acid biosynthesis; L-arginine biosynthesis; L-arginine from L-ornithine and carbamoyl phosphate: step 3/3. The chain is Argininosuccinate lyase from Pseudomonas entomophila (strain L48).